A 231-amino-acid chain; its full sequence is Cytochrome c oxidase subunit 2 (231 aa).

Over methionine 1–serine 14 the chain is Mitochondrial intermembrane. The helical transmembrane segment at proline 15–methionine 45 threads the bilayer. Residues leucine 46–glutamine 59 lie on the Mitochondrial matrix side of the membrane. Residues glutamate 60–threonine 87 traverse the membrane as a helical segment. The Mitochondrial intermembrane portion of the chain corresponds to aspartate 88–leucine 231. 6 residues coordinate Cu cation: histidine 161, cysteine 196, glutamate 198, cysteine 200, histidine 204, and methionine 207. Glutamate 198 serves as a coordination point for Mg(2+).

It belongs to the cytochrome c oxidase subunit 2 family. As to quaternary structure, component of the cytochrome c oxidase (complex IV, CIV), a multisubunit enzyme composed of 14 subunits. The complex is composed of a catalytic core of 3 subunits MT-CO1, MT-CO2 and MT-CO3, encoded in the mitochondrial DNA, and 11 supernumerary subunits COX4I, COX5A, COX5B, COX6A, COX6B, COX6C, COX7A, COX7B, COX7C, COX8 and NDUFA4, which are encoded in the nuclear genome. The complex exists as a monomer or a dimer and forms supercomplexes (SCs) in the inner mitochondrial membrane with NADH-ubiquinone oxidoreductase (complex I, CI) and ubiquinol-cytochrome c oxidoreductase (cytochrome b-c1 complex, complex III, CIII), resulting in different assemblies (supercomplex SCI(1)III(2)IV(1) and megacomplex MCI(2)III(2)IV(2)). Found in a complex with TMEM177, COA6, COX18, COX20, SCO1 and SCO2. Interacts with TMEM177 in a COX20-dependent manner. Interacts with COX20. Interacts with COX16. Requires Cu cation as cofactor.

The protein resides in the mitochondrion inner membrane. It catalyses the reaction 4 Fe(II)-[cytochrome c] + O2 + 8 H(+)(in) = 4 Fe(III)-[cytochrome c] + 2 H2O + 4 H(+)(out). Its function is as follows. Component of the cytochrome c oxidase, the last enzyme in the mitochondrial electron transport chain which drives oxidative phosphorylation. The respiratory chain contains 3 multisubunit complexes succinate dehydrogenase (complex II, CII), ubiquinol-cytochrome c oxidoreductase (cytochrome b-c1 complex, complex III, CIII) and cytochrome c oxidase (complex IV, CIV), that cooperate to transfer electrons derived from NADH and succinate to molecular oxygen, creating an electrochemical gradient over the inner membrane that drives transmembrane transport and the ATP synthase. Cytochrome c oxidase is the component of the respiratory chain that catalyzes the reduction of oxygen to water. Electrons originating from reduced cytochrome c in the intermembrane space (IMS) are transferred via the dinuclear copper A center (CU(A)) of subunit 2 and heme A of subunit 1 to the active site in subunit 1, a binuclear center (BNC) formed by heme A3 and copper B (CU(B)). The BNC reduces molecular oxygen to 2 water molecules using 4 electrons from cytochrome c in the IMS and 4 protons from the mitochondrial matrix. This Aotus nigriceps (Black-headed night monkey) protein is Cytochrome c oxidase subunit 2 (MT-CO2).